The chain runs to 624 residues: ERAD-associated E3 ubiquitin-protein ligase ASI1 (624 aa).

The Perinuclear space portion of the chain corresponds to 1–69; the sequence is MNSSTSSENV…SEEIPPTLRS (69 aa). N-linked (GlcNAc...) asparagine glycans are attached at residues Asn2, Asn19, and Asn29. The helical transmembrane segment at 70–90 threads the bilayer; that stretch reads VFDTIGFFFSPYAIFCFVIAI. At 91 to 116 the chain is on the nuclear side; the sequence is VLNRFVVFYAVLNNGSRRTLPLWLSN. The chain crosses the membrane as a helical span at residues 117–137; it reads VFHVSAVVVLAMVSLGPLTLG. Residues 138–152 are Perinuclear space-facing; sequence KDFKILGDPAFAQEK. The helical transmembrane segment at 153–173 threads the bilayer; the sequence is FLLNIFYAFAYSYCVETIFTI. Over 174 to 209 the chain is Nuclear; the sequence is MRNSSPLEGTDYSLFELSIQFYTMTNNNTKFLDSPD. Residues 210-230 traverse the membrane as a helical segment; it reads YIIDCSMAILSRILIHLVEIF. The Perinuclear space segment spans residues 231 to 273; sequence RLRNYRLLFSTIMNLCHICYLGIRVKQGGWKSLPFSVKFRHFP. Residues 274–294 form a helical membrane-spanning segment; it reads KLFSVSIICLSLLIFKLSCLI. Residues 295 to 624 are Nuclear-facing; that stretch reads RWDPFGKSRN…CKVHPVSDSK (330 aa). Residues 467–490 form a disordered region; that stretch reads TSDDEYSEDYEPSEVESLGDSDEE. Residues 468-490 show a composition bias toward acidic residues; sequence SDDEYSEDYEPSEVESLGDSDEE. The RING-type; atypical zinc-finger motif lies at 568-608; sequence CAVCKVNERNTVLWPCRCFAICEDCRISLGLRGFSTCVCCR.

As to quaternary structure, component of the Asi complex, which contains ASI1, ASI2 and ASI3. Interacts directly with ASI3. In terms of processing, glycosylation is not required for ASI1 function.

It localises to the nucleus inner membrane. The catalysed reaction is S-ubiquitinyl-[E2 ubiquitin-conjugating enzyme]-L-cysteine + [acceptor protein]-L-lysine = [E2 ubiquitin-conjugating enzyme]-L-cysteine + N(6)-ubiquitinyl-[acceptor protein]-L-lysine.. In terms of biological role, E3 ubiquitin-protein ligase which transfers ubiquitin to substrates promoting their degradation. Part of the nuclear inner membrane (INM)-specific branch of the ER-associated degradation (ERAD) pathway, required for the elimination of misfolded proteins in the INM, a specialized ER subdomain. Required for ERG11 degradation. Negative regulator of SPS-sensor signaling. Together with ASI2 and ASI3, prevents the unprocessed precursor forms of STP1 and STP2 that escape cytoplasmic anchoring from inducing SPS-sensor-regulated genes in the absence of inducing signals. Controls amino acid permease (AAP) gene expression in response to amino acid availability, a process mediated by the transcription factors STP1 and STP1. In Saccharomyces cerevisiae (strain ATCC 204508 / S288c) (Baker's yeast), this protein is ERAD-associated E3 ubiquitin-protein ligase ASI1 (ASI1).